The sequence spans 557 residues: Formate--tetrahydrofolate ligase (557 aa).

67-74 (TPAGEGKT) is an ATP binding site.

It belongs to the formate--tetrahydrofolate ligase family.

The catalysed reaction is (6S)-5,6,7,8-tetrahydrofolate + formate + ATP = (6R)-10-formyltetrahydrofolate + ADP + phosphate. It functions in the pathway one-carbon metabolism; tetrahydrofolate interconversion. This Cereibacter sphaeroides (strain ATCC 17025 / ATH 2.4.3) (Rhodobacter sphaeroides) protein is Formate--tetrahydrofolate ligase.